Consider the following 340-residue polypeptide: Oxygen-dependent coproporphyrinogen-III oxidase (340 aa).

Residues 1-14 are compositionally biased toward polar residues; the sequence is MTVSPTTQPQTNHS. The tract at residues 1 to 22 is disordered; the sequence is MTVSPTTQPQTNHSLPPADAKQ. Residue Ser109 participates in substrate binding. A divalent metal cation contacts are provided by His113 and His123. The active-site Proton donor is the His123. 125 to 127 contacts substrate; the sequence is NYR. Residues His157 and His187 each contribute to the a divalent metal cation site. The important for dimerization stretch occupies residues 278–313; sequence YVEFNLVYDRGTIFGLQTNGRTESILMSLPPLVRWQ. 296 to 298 is a binding site for substrate; that stretch reads NGR.

The protein belongs to the aerobic coproporphyrinogen-III oxidase family. In terms of assembly, homodimer. Requires a divalent metal cation as cofactor.

Its subcellular location is the cytoplasm. The catalysed reaction is coproporphyrinogen III + O2 + 2 H(+) = protoporphyrinogen IX + 2 CO2 + 2 H2O. Its pathway is porphyrin-containing compound metabolism; protoporphyrin-IX biosynthesis; protoporphyrinogen-IX from coproporphyrinogen-III (O2 route): step 1/1. Involved in the heme and chlorophyll biosynthesis. Catalyzes the aerobic oxidative decarboxylation of propionate groups of rings A and B of coproporphyrinogen-III to yield the vinyl groups in protoporphyrinogen-IX. In Synechocystis sp. (strain ATCC 27184 / PCC 6803 / Kazusa), this protein is Oxygen-dependent coproporphyrinogen-III oxidase.